Consider the following 142-residue polypeptide: Large ribosomal subunit protein uL13 (142 aa).

Belongs to the universal ribosomal protein uL13 family. As to quaternary structure, part of the 50S ribosomal subunit.

Its function is as follows. This protein is one of the early assembly proteins of the 50S ribosomal subunit, although it is not seen to bind rRNA by itself. It is important during the early stages of 50S assembly. The protein is Large ribosomal subunit protein uL13 of Syntrophus aciditrophicus (strain SB).